A 452-amino-acid polypeptide reads, in one-letter code: mRNA export factor ICP27 homolog (452 aa).

Residues 42–164 (EAIGSTPGED…RNDQTHDESY (123 aa)) are disordered. The segment covering 98-107 (SNHHGGRDVE) has biased composition (basic and acidic residues). Positions 129–144 (SRKHRDRSLSNRRRRP) are enriched in basic residues. Basic and acidic residues predominate over residues 154–164 (ERNDQTHDESY). Zn(2+) contacts are provided by cysteine 335, histidine 417, cysteine 421, and cysteine 426. A CHC2-type zinc finger spans residues 335-426 (CLLLNRDNDL…HQRECGRVEC (92 aa)).

This sequence belongs to the HHV-1 ICP27 protein family. As to quaternary structure, homodimer. Homodimerization is required for transactivation. Associates in a complex with RNA, and host export factors NXF1/TAP and ALYREF; these interactions allow nuclear export of viral transcripts. Interacts with three host shuttling SR proteins SRSF1, SRSF3 and SRSF7. Interacts with host SRPK1. Interacts with IE62; this interaction enhances IE62 transactivation. Phosphorylated in vitro by SRPK1.

The protein localises to the host cytoplasm. It localises to the host nucleus. In terms of biological role, multifunctional regulator of the expression of viral genes that mediates nuclear export of viral intronless mRNAs. This immediate early (EI) protein promotes the nuclear export of viral intronless mRNAs by interacting with mRNAs and host NXF1/TAP. In Varicella-zoster virus (strain Dumas) (HHV-3), this protein is mRNA export factor ICP27 homolog.